The following is a 55-amino-acid chain: Antiviral protein GAP-31 (55 aa).

The segment at 29 to 55 (KPEGNSHGIPSLRKSSDDPGSSFVVAG) is disordered.

This sequence belongs to the ribosome-inactivating protein family. Type 1 RIP subfamily.

It catalyses the reaction Endohydrolysis of the N-glycosidic bond at one specific adenosine on the 28S rRNA.. Functionally, single-chain ribosome-inactivating protein, possessing high antiviral potency and low toxicity to normal cells in culture and to intact animals. Capable of inhibiting HIV-1 infection and replication. The polypeptide is Antiviral protein GAP-31 (Suregada multiflora (False lime)).